Consider the following 301-residue polypeptide: Probable 2-oxoglutarate-dependent dioxygenase AOP1 (301 aa).

A Fe2OG dioxygenase domain is found at 158–262 (TYYLTRLMKY…RYSTGLFSIP (105 aa)). Histidine 186, aspartate 188, and histidine 243 together coordinate Fe cation. Arginine 253 serves as a coordination point for 2-oxoglutarate.

Belongs to the iron/ascorbate-dependent oxidoreductase family. Fe(2+) serves as cofactor.

Probable 2-oxoglutarate-dependent dioxygenase that may be involved in glucosinolates biosynthesis. May play a role in the production of aliphatic glucosinolates. This chain is Probable 2-oxoglutarate-dependent dioxygenase AOP1 (AOP1), found in Arabidopsis thaliana (Mouse-ear cress).